A 387-amino-acid chain; its full sequence is 3-ketoacyl-CoA thiolase (387 aa).

The Acyl-thioester intermediate role is filled by Cys91. Catalysis depends on proton acceptor residues His343 and Cys373.

The protein belongs to the thiolase-like superfamily. Thiolase family. In terms of assembly, heterotetramer of two alpha chains (FadB) and two beta chains (FadA).

Its subcellular location is the cytoplasm. The catalysed reaction is an acyl-CoA + acetyl-CoA = a 3-oxoacyl-CoA + CoA. Its pathway is lipid metabolism; fatty acid beta-oxidation. Its function is as follows. Catalyzes the final step of fatty acid oxidation in which acetyl-CoA is released and the CoA ester of a fatty acid two carbons shorter is formed. This is 3-ketoacyl-CoA thiolase from Escherichia coli O6:K15:H31 (strain 536 / UPEC).